Here is a 264-residue protein sequence, read N- to C-terminus: MKPYLDLLQHVLEHGAEKSDRTGTGTRSVFGWQMRFDLNDGFPLVTTKKLHLRSIIHELLWFLQGDTNIGYLSDNQVRIWDEWADDNGDLGPVYGKQWRRWTGPDGVEIDQMQWLVDEIKRNPDSRRLVISAWNVGELPQMALMPCHSLFQFYVVNGKLSCQLYQRSGDIFLGVPFNIASYALLTHMVAQATGLGVGDFVHTLGDAHLYSNHFDQARKQLTRTPRALPTLRLNPEVTDLFAFRFEDIAIEGYDPHPAIKAPVAV.

Arg21 is a dUMP binding site. Position 51 (His51) interacts with (6R)-5,10-methylene-5,6,7,8-tetrahydrofolate. 126–127 lines the dUMP pocket; it reads RR. The active-site Nucleophile is Cys146. DUMP is bound by residues 166–169, Asn177, and 207–209; these read RSGD and HLY. Residue Asp169 participates in (6R)-5,10-methylene-5,6,7,8-tetrahydrofolate binding. Ala263 lines the (6R)-5,10-methylene-5,6,7,8-tetrahydrofolate pocket.

This sequence belongs to the thymidylate synthase family. Bacterial-type ThyA subfamily. In terms of assembly, homodimer.

It is found in the cytoplasm. The catalysed reaction is dUMP + (6R)-5,10-methylene-5,6,7,8-tetrahydrofolate = 7,8-dihydrofolate + dTMP. Its pathway is pyrimidine metabolism; dTTP biosynthesis. In terms of biological role, catalyzes the reductive methylation of 2'-deoxyuridine-5'-monophosphate (dUMP) to 2'-deoxythymidine-5'-monophosphate (dTMP) while utilizing 5,10-methylenetetrahydrofolate (mTHF) as the methyl donor and reductant in the reaction, yielding dihydrofolate (DHF) as a by-product. This enzymatic reaction provides an intracellular de novo source of dTMP, an essential precursor for DNA biosynthesis. The protein is Thymidylate synthase of Xanthomonas oryzae pv. oryzae (strain MAFF 311018).